The primary structure comprises 128 residues: Small ribosomal subunit protein eS8 (128 aa).

Positions 1-37 (MGYFQGNDFRKITGGKKGKHRDKRKFELGSPPTETKL) are disordered. A compositionally biased stretch (basic residues) spans 13 to 23 (TGGKKGKHRDK).

Belongs to the eukaryotic ribosomal protein eS8 family. In terms of assembly, part of the 30S ribosomal subunit.

This chain is Small ribosomal subunit protein eS8, found in Sulfurisphaera tokodaii (strain DSM 16993 / JCM 10545 / NBRC 100140 / 7) (Sulfolobus tokodaii).